Here is a 549-residue protein sequence, read N- to C-terminus: Ribosomal protein S6 kinase-like 1 (549 aa).

The MIT domain maps to Ile-87–Asn-115. Residues Ser-145–Phe-539 enclose the Protein kinase domain. ATP is bound by residues Arg-151–Ile-159 and Lys-177. The interval Leu-260 to His-325 is disordered. The active-site Proton acceptor is the Asp-412.

It belongs to the protein kinase superfamily. Ser/Thr protein kinase family. S6 kinase subfamily.

It carries out the reaction L-seryl-[protein] + ATP = O-phospho-L-seryl-[protein] + ADP + H(+). The enzyme catalyses L-threonyl-[protein] + ATP = O-phospho-L-threonyl-[protein] + ADP + H(+). The protein is Ribosomal protein S6 kinase-like 1 (RPS6KL1) of Pongo abelii (Sumatran orangutan).